The sequence spans 180 residues: NAD(P)H-quinone oxidoreductase subunit I, chloroplastic (180 aa).

4Fe-4S ferredoxin-type domains are found at residues 55 to 84 and 95 to 124; these read GRIH…VDWR and LNYS…MTEE. [4Fe-4S] cluster contacts are provided by cysteine 64, cysteine 67, cysteine 70, cysteine 74, cysteine 104, cysteine 107, cysteine 110, and cysteine 114.

This sequence belongs to the complex I 23 kDa subunit family. In terms of assembly, NDH is composed of at least 16 different subunits, 5 of which are encoded in the nucleus. [4Fe-4S] cluster serves as cofactor.

It is found in the plastid. Its subcellular location is the chloroplast thylakoid membrane. It carries out the reaction a plastoquinone + NADH + (n+1) H(+)(in) = a plastoquinol + NAD(+) + n H(+)(out). The catalysed reaction is a plastoquinone + NADPH + (n+1) H(+)(in) = a plastoquinol + NADP(+) + n H(+)(out). Functionally, NDH shuttles electrons from NAD(P)H:plastoquinone, via FMN and iron-sulfur (Fe-S) centers, to quinones in the photosynthetic chain and possibly in a chloroplast respiratory chain. The immediate electron acceptor for the enzyme in this species is believed to be plastoquinone. Couples the redox reaction to proton translocation, and thus conserves the redox energy in a proton gradient. This Agrostis stolonifera (Creeping bentgrass) protein is NAD(P)H-quinone oxidoreductase subunit I, chloroplastic.